The following is a 209-amino-acid chain: Uracil phosphoribosyltransferase (209 aa).

Residues Arg-79, Arg-104, and Asp-131 to Ser-139 contribute to the 5-phospho-alpha-D-ribose 1-diphosphate site. Uracil-binding positions include Ile-194 and Gly-199–Ala-201. Residue Asp-200 coordinates 5-phospho-alpha-D-ribose 1-diphosphate.

This sequence belongs to the UPRTase family. Mg(2+) is required as a cofactor.

It carries out the reaction UMP + diphosphate = 5-phospho-alpha-D-ribose 1-diphosphate + uracil. The protein operates within pyrimidine metabolism; UMP biosynthesis via salvage pathway; UMP from uracil: step 1/1. With respect to regulation, allosterically activated by GTP. Catalyzes the conversion of uracil and 5-phospho-alpha-D-ribose 1-diphosphate (PRPP) to UMP and diphosphate. This Lactobacillus gasseri (strain ATCC 33323 / DSM 20243 / BCRC 14619 / CIP 102991 / JCM 1131 / KCTC 3163 / NCIMB 11718 / NCTC 13722 / AM63) protein is Uracil phosphoribosyltransferase.